A 302-amino-acid polypeptide reads, in one-letter code: Nucleotide-binding protein Bcenmc03_2806 (302 aa).

8-15 (GISGSGKS) serves as a coordination point for ATP. 57-60 (DARS) contacts GTP.

This sequence belongs to the RapZ-like family.

Its function is as follows. Displays ATPase and GTPase activities. This Burkholderia orbicola (strain MC0-3) protein is Nucleotide-binding protein Bcenmc03_2806.